The chain runs to 82 residues: Small ribosomal subunit protein bS18 (82 aa).

This sequence belongs to the bacterial ribosomal protein bS18 family. Part of the 30S ribosomal subunit. Forms a tight heterodimer with protein bS6.

Binds as a heterodimer with protein bS6 to the central domain of the 16S rRNA, where it helps stabilize the platform of the 30S subunit. The sequence is that of Small ribosomal subunit protein bS18 from Chlamydia pneumoniae (Chlamydophila pneumoniae).